The following is a 154-amino-acid chain: Cytochrome c-type biogenesis protein CcmE (154 aa).

Over 1-7 (MKPRQKR) the chain is Cytoplasmic. A helical; Signal-anchor for type II membrane protein transmembrane segment spans residues 8–28 (LVLIVGIVAAVGVAAALVLNA). Topologically, residues 29–154 (FQSNLVFFYS…GETVVKETRP (126 aa)) are periplasmic. Heme-binding residues include His121 and Tyr125. The interval 131–154 (AEALQRAGASNQKLGETVVKETRP) is disordered.

It belongs to the CcmE/CycJ family.

Its subcellular location is the cell inner membrane. In terms of biological role, heme chaperone required for the biogenesis of c-type cytochromes. Transiently binds heme delivered by CcmC and transfers the heme to apo-cytochromes in a process facilitated by CcmF and CcmH. This is Cytochrome c-type biogenesis protein CcmE from Methylibium petroleiphilum (strain ATCC BAA-1232 / LMG 22953 / PM1).